Reading from the N-terminus, the 78-residue chain is Structural DNA-binding protein p10 (78 aa).

A compositionally biased stretch (low complexity) spans 1–25 (MPTKAGTKSTANKKTTKGSSKSGSA). The tract at residues 1–41 (MPTKAGTKSTANKKTTKGSSKSGSARGHTGKTHAPPSMHSG) is disordered.

It belongs to the asfivirus P10 family.

It localises to the virion. May play a role in genome packaging through direct interaction with viral DNA. Binds to ssDNA and dsDNA with the same apparent affinity in vitro. The chain is Structural DNA-binding protein p10 from African swine fever virus (isolate Warthog/Namibia/Wart80/1980) (ASFV).